The primary structure comprises 82 residues: KKEKEQGCYEDFIECLKLYDKEENGTMMLAELQHALLALGESLDDEQVETLFADCMDPEDDEGFIPYSQFVQRLMSDPVVFD.

The region spanning 7–42 (GCYEDFIECLKLYDKEENGTMMLAELQHALLALGES) is the EF-hand domain.

Myosin is a hexamer of 2 heavy chains and 4 light chains.

The sequence is that of Myosin light chain alkali (Mlc1) from Drosophila mauritiana (Fruit fly).